Here is a 517-residue protein sequence, read N- to C-terminus: MIEVVVGIGAGLIGIGAGYLVAKKINDANYSIFLEQAKAKAKAIEFEAESILKDAKVKVNEAEFEAKKRYEEKGSRLQKEYNQKLDDISKKEHAILNEQEILKNSKDELEKSQNQAKTLYEEGLNLKIAYQDKLSETLKVLEHVAGLTEDEAKNMVLRKVEEKSRAEIAHIVRKYEEEAKKEAKKRANYILAQATSRYAGEFAAERLINVVNIKNDELKGRIIGKEGRNIKTLEMVLGVDVIIDDTPHAIILSSFNLYRRAIATRVIELLVEDGRIQPARIEEIHKKVCDEFEASILEEGENILIDLGISKVHPEIVKLIGKLKFRASYGQNALAHSLEVAHLSGIIAAETGGDEKLAKRAGILHDIGKALTHEYEGSHVDLGAEICKRYKEHPVVINAIYAHHGHEEALSVECAAVCAADALSAARPGARREVLESFLKRVEEIESIAISKEGIKGAYAINAGREIRVIANAKLVNDDEAVLLAKEIAEEIQDKIQYPGEIKVNVIRELRAIEFAK.

A helical membrane pass occupies residues 1 to 21 (MIEVVVGIGAGLIGIGAGYLV). A KH domain is found at 207-273 (LINVVNIKND…TRVIELLVED (67 aa)). The 94-residue stretch at 333–426 (ALAHSLEVAH…VCAADALSAA (94 aa)) folds into the HD domain.

Belongs to the RNase Y family.

It localises to the cell membrane. Endoribonuclease that initiates mRNA decay. This chain is Ribonuclease Y, found in Campylobacter fetus subsp. fetus (strain 82-40).